A 163-amino-acid chain; its full sequence is Nucleotide-binding protein C8J_0350 (163 aa).

The protein belongs to the YajQ family.

In terms of biological role, nucleotide-binding protein. This Campylobacter jejuni subsp. jejuni serotype O:6 (strain 81116 / NCTC 11828) protein is Nucleotide-binding protein C8J_0350.